A 283-amino-acid polypeptide reads, in one-letter code: NADPH-dependent 7-cyano-7-deazaguanine reductase (283 aa).

90–92 is a binding site for substrate; that stretch reads IES. Residue 92–93 coordinates NADPH; it reads SK. Cysteine 190 functions as the Thioimide intermediate in the catalytic mechanism. The active-site Proton donor is aspartate 197. Position 229-230 (229-230) interacts with substrate; the sequence is HE. 258–259 contacts NADPH; sequence RG.

The protein belongs to the GTP cyclohydrolase I family. QueF type 2 subfamily. As to quaternary structure, homodimer.

It localises to the cytoplasm. It catalyses the reaction 7-aminomethyl-7-carbaguanine + 2 NADP(+) = 7-cyano-7-deazaguanine + 2 NADPH + 3 H(+). The protein operates within tRNA modification; tRNA-queuosine biosynthesis. In terms of biological role, catalyzes the NADPH-dependent reduction of 7-cyano-7-deazaguanine (preQ0) to 7-aminomethyl-7-deazaguanine (preQ1). This is NADPH-dependent 7-cyano-7-deazaguanine reductase from Dechloromonas aromatica (strain RCB).